Here is a 388-residue protein sequence, read N- to C-terminus: Type II secretion system protein F (388 aa).

A disordered region spans residues 1–28; the sequence is MTEGDSARQVRQQLREQGLTPLEVNETT. Over 1–153 the chain is Cytoplasmic; the sequence is MTEGDSARQV…HMRTKLLQAM (153 aa). Ca(2+) contacts are provided by glutamate 79, asparagine 133, and aspartate 137. The helical transmembrane segment at 154–174 threads the bilayer; that stretch reads IYPIVLTLVAVGVISILLTAV. Over 175-205 the chain is Periplasmic; sequence VPKVVAQFEHMGQQLPATTRFLIGTSELMQH. Residues 206–226 traverse the membrane as a helical segment; that stretch reads YGLWFLLLLFIGGFVWRWWLT. The Cytoplasmic segment spans residues 227-350; sequence DEKRRRHWHQ…QDREFETQVN (124 aa). A helical transmembrane segment spans residues 351-371; sequence IALGVFEPLLVVSMAGVVLFI. Residues 372-388 lie on the Periplasmic side of the membrane; the sequence is VMSILQPILELNNMVNL.

The protein belongs to the GSP F family. As to quaternary structure, type II secretion system is composed of four main components: the outer membrane complex, the inner membrane complex, the cytoplasmic secretion ATPase and the periplasm-spanning pseudopilus. Homodimer. Interacts with ExeE and ExeL components.

The protein localises to the cell inner membrane. Functionally, component of the type II secretion system inner membrane complex required for the energy-dependent secretion of extracellular factors such as proteases and toxins from the periplasm. In Aeromonas hydrophila, this protein is Type II secretion system protein F (exeF).